We begin with the raw amino-acid sequence, 196 residues long: Recombination protein RecR (196 aa).

The C4-type zinc finger occupies 57 to 72; the sequence is CERCHTFTQADICATC. The Toprim domain maps to 80–175; the sequence is SKLCVVETPA…RLTRLARGVP (96 aa).

Belongs to the RecR family.

In terms of biological role, may play a role in DNA repair. It seems to be involved in an RecBC-independent recombinational process of DNA repair. It may act with RecF and RecO. The sequence is that of Recombination protein RecR from Albidiferax ferrireducens (strain ATCC BAA-621 / DSM 15236 / T118) (Rhodoferax ferrireducens).